A 373-amino-acid polypeptide reads, in one-letter code: UDP-N-acetylenolpyruvoylglucosamine reductase (373 aa).

An FAD-binding PCMH-type domain is found at 30-203; the sequence is LACMADSVVT…SRVGFRLHTD (174 aa). Arg180 is a catalytic residue. Residue Ser258 is the Proton donor of the active site. Glu356 is a catalytic residue.

Belongs to the MurB family. FAD is required as a cofactor.

It localises to the cytoplasm. It carries out the reaction UDP-N-acetyl-alpha-D-muramate + NADP(+) = UDP-N-acetyl-3-O-(1-carboxyvinyl)-alpha-D-glucosamine + NADPH + H(+). Its pathway is cell wall biogenesis; peptidoglycan biosynthesis. In terms of biological role, cell wall formation. This is UDP-N-acetylenolpyruvoylglucosamine reductase from Psychrobacter cryohalolentis (strain ATCC BAA-1226 / DSM 17306 / VKM B-2378 / K5).